The sequence spans 201 residues: Putative pseudouridine methyltransferase (201 aa).

Residues Met-132 and Cys-186 each coordinate S-adenosyl-L-methionine.

The protein belongs to the methyltransferase superfamily. TrmY family.

Its subcellular location is the cytoplasm. The protein is Putative pseudouridine methyltransferase of Vibrio cholerae serotype O1 (strain ATCC 39315 / El Tor Inaba N16961).